The sequence spans 436 residues: 3-ketoacyl-CoA thiolase (436 aa).

C99 (acyl-thioester intermediate) is an active-site residue. Residues H392 and C422 each act as proton acceptor in the active site.

It belongs to the thiolase-like superfamily. Thiolase family. Heterotetramer of two alpha chains (FadJ) and two beta chains (FadI).

The protein localises to the cytoplasm. The catalysed reaction is an acyl-CoA + acetyl-CoA = a 3-oxoacyl-CoA + CoA. Its pathway is lipid metabolism; fatty acid beta-oxidation. Catalyzes the final step of fatty acid oxidation in which acetyl-CoA is released and the CoA ester of a fatty acid two carbons shorter is formed. This chain is 3-ketoacyl-CoA thiolase, found in Escherichia coli O7:K1 (strain IAI39 / ExPEC).